The following is a 136-amino-acid chain: Ribonuclease P protein component (136 aa).

Belongs to the RnpA family. Consists of a catalytic RNA component (M1 or rnpB) and a protein subunit.

The enzyme catalyses Endonucleolytic cleavage of RNA, removing 5'-extranucleotides from tRNA precursor.. Functionally, RNaseP catalyzes the removal of the 5'-leader sequence from pre-tRNA to produce the mature 5'-terminus. It can also cleave other RNA substrates such as 4.5S RNA. The protein component plays an auxiliary but essential role in vivo by binding to the 5'-leader sequence and broadening the substrate specificity of the ribozyme. The polypeptide is Ribonuclease P protein component (Arthrobacter sp. (strain FB24)).